The primary structure comprises 185 residues: Elongation factor P (185 aa).

Belongs to the elongation factor P family.

The protein localises to the cytoplasm. The protein operates within protein biosynthesis; polypeptide chain elongation. Involved in peptide bond synthesis. Stimulates efficient translation and peptide-bond synthesis on native or reconstituted 70S ribosomes in vitro. Probably functions indirectly by altering the affinity of the ribosome for aminoacyl-tRNA, thus increasing their reactivity as acceptors for peptidyl transferase. This is Elongation factor P from Dechloromonas aromatica (strain RCB).